A 367-amino-acid chain; its full sequence is MPRFLPEPPHRHGNPATTAVVLVNLGTPDAPTAPALKRYLKEFLSDPRVVEIPKPVWWLILNGIILNIRPKKSAAKYASVWMPEGSPLRVHTERQAKLLKGLLGQRGHHLTVTSAMRYGSPSIPEVLAHLKAEGAKRILLVPMYPQYAASTTATVVDEAANWLTKIRNQPEMRFVRNFHDHEGYLAALEKSVRQHWQTNGSLGDNDRLLISFHGLPKRSLDLGDPYFCECHKTGRLLAERLNLKPEQFQICFQSRFGKAEWLQPYTAPTLHEWGSKGVRRVDVICPGFVADCLETLEEIAQEGRDDFLKAGGKEYHYIPALNEDDAWIKALADIAEQHLGGWSTKTAFDPHALETSAREAFKFGARA.

His213 and Glu294 together coordinate Fe cation.

This sequence belongs to the ferrochelatase family.

It is found in the cytoplasm. It catalyses the reaction heme b + 2 H(+) = protoporphyrin IX + Fe(2+). It functions in the pathway porphyrin-containing compound metabolism; protoheme biosynthesis; protoheme from protoporphyrin-IX: step 1/1. Catalyzes the ferrous insertion into protoporphyrin IX. This is Ferrochelatase from Dechloromonas aromatica (strain RCB).